The sequence spans 237 residues: Mitochondrial inner membrane protease atp23 (237 aa).

Over residues 1–13 (MSDSQPCSTPSTR) the composition is skewed to polar residues. The disordered stretch occupies residues 1–23 (MSDSQPCSTPSTRGKSDSGYIPG). His136 is an a divalent metal cation binding site. Residue Glu137 is part of the active site. Position 140 (His140) interacts with a divalent metal cation.

This sequence belongs to the peptidase M76 family.

The protein resides in the mitochondrion inner membrane. In terms of biological role, has a dual role in the assembly of mitochondrial ATPase. Acts as a protease that removes N-terminal residues of mitochondrial ATPase CF(0) subunit 6 at the intermembrane space side. Also involved in the correct assembly of the membrane-embedded ATPase CF(0) particle, probably mediating association of subunit 6 with the subunit 9 ring. The protein is Mitochondrial inner membrane protease atp23 (atp23) of Aspergillus fumigatus (strain ATCC MYA-4609 / CBS 101355 / FGSC A1100 / Af293) (Neosartorya fumigata).